We begin with the raw amino-acid sequence, 194 residues long: HTH-type nicotine-responsive transcriptional repressor HdnoR (194 aa).

Residues 6-66 (VDRRQQLIDA…AAAAELLQQL (61 aa)) enclose the HTH tetR-type domain. Residues 29–48 (SLRTIASEAKASLAAVHVCF) constitute a DNA-binding region (H-T-H motif).

Homodimer.

With respect to regulation, 6-hydroxy-D-nicotine and 6-hydroxy-L-nicotine prevent HdnoR from binding to the IR1 DNA. Both 6-hydroxy-nicotine enantiomers prevent DNA-protein complex formation at micromolar concentrations, with the D-enantiomer being twice as potent as the L-enantiomer. A thousand-fold higher L-nicotine concentration is required to elicit a similar effect. Its function is as follows. Represses expression of the 6-hydroxy-D-nicotine oxidase (6-hdno). Acts by binding to a gene operator site consisting of two inverted repeats, IR1 (covering the 6-hdno promoter region) and IR2 (situated upstream from the 6-hdno promoter). Binding to one site may stimulate binding of the protein to the second site. The sequence is that of HTH-type nicotine-responsive transcriptional repressor HdnoR from Paenarthrobacter nicotinovorans (Arthrobacter nicotinovorans).